A 451-amino-acid polypeptide reads, in one-letter code: Glucose-6-phosphate isomerase (451 aa).

Glu291 (proton donor) is an active-site residue. Catalysis depends on residues His312 and Lys426.

The protein belongs to the GPI family.

It is found in the cytoplasm. It catalyses the reaction alpha-D-glucose 6-phosphate = beta-D-fructose 6-phosphate. It participates in carbohydrate biosynthesis; gluconeogenesis. The protein operates within carbohydrate degradation; glycolysis; D-glyceraldehyde 3-phosphate and glycerone phosphate from D-glucose: step 2/4. Functionally, catalyzes the reversible isomerization of glucose-6-phosphate to fructose-6-phosphate. This is Glucose-6-phosphate isomerase from Thermoanaerobacter sp. (strain X514).